The chain runs to 397 residues: Teichoic acid D-alanine hydrolase (397 aa).

A signal peptide spans 1 to 27 (MKFNKEKLVIHACVLLFIIISIGLVFH).

Its subcellular location is the cell membrane. The catalysed reaction is [(4-D-Ala)-(2-GlcNAc)-Rib-ol-P]n-[Gro-P]m-beta-D-ManNAc-(1-&gt;4)-alpha-D-GlcNAc-P-peptidoglycan + n H2O = [(2-GlcNAc)-Rib-ol-P]n-[Gro-P]m-beta-D-ManNAc-(1-&gt;4)-alpha-D-GlcNAc-P-peptidoglycan + n D-alanine.. Its function is as follows. Catalyzes the liberation of D-alanyl moieties present on wall teichoic acid (WTA) and lipoteichoic acid (LTA). Affects the methicillin resistance level and autolysis in the presence of Triton X-100 as well as the cell wall structure. The sequence is that of Teichoic acid D-alanine hydrolase (fmtA) from Staphylococcus aureus (strain MRSA252).